The chain runs to 674 residues: uncharacterized protein (674 aa).

A signal peptide spans 1 to 24 (MKTLKALKIFIIVYISSVSLESFA). 2 helical membrane-spanning segments follow: residues 226-246 (IIGA…ALNK) and 254-274 (ITLF…LEPL). Positions 363-384 (GNGPGGNNKPIPNFDPDSKKDR) are disordered. 4 helical membrane-spanning segments follow: residues 409 to 429 (IIIL…LLYF), 436 to 456 (CMIT…MVLF), 469 to 489 (VCIS…LLIT), and 562 to 582 (VVSI…FYYF). A disordered region spans residues 624–674 (SSVHAQGKSPVEDKPDIGSKRKDGVQQGEDSENSSGGELADLASGSGGGKL). Basic and acidic residues predominate over residues 633 to 647 (PVEDKPDIGSKRKDG).

This sequence belongs to the TrbL/VirB6 family.

Its subcellular location is the cell membrane. This is an uncharacterized protein from Rickettsia typhi (strain ATCC VR-144 / Wilmington).